A 547-amino-acid chain; its full sequence is MNWQTKDELLALLTSLVQYESITGSKGEVALAEYLYFILKDKPYFQKHPDDVTLHPMDDGRSFLTALVKKKNVKKTVLLLSHFDVVDIEDYGEFKHMACKPAELLSSFLEKKELLPERVRRDAESGDWLFGRGTMDMKAGLCIQLSMLERAMNGHFEGNLLLITVPDEEVNSRGMIEAVPALKEMEKKHDITLTACLNAEPMFEKFPGDQQQYFYTGSIGKVLAGFFCKGIETHVGEPFSGLNANLMVSEINRLLELNADYCEKVDGEVTPPPVNLMQKDLKEAYSVQTPHTAVTLFNVLSMKRSASELHQMLLKTAEQAAEEIMSNVRKKTQDFQQFEPFQPIERDVTVLTFDELVSRAKKRAGISETERALNYAFANRGELGDRDFSTKIVSELASLCKEDAPLIVLFYSPPLYPAVSSKDDQLIRNTADQIKHYAAERYGIALREVQYFPGLSDLSYLQLEKQEVDAYTSNMPLFNRGYSLPSGKNQALYVPVLNVGPAGKDPHKWTERLYMPYSFEVLPDLLSFTISALLKQSESAGQLLREK.

It to B.subtilis RocB.

This is an uncharacterized protein from Bacillus subtilis (strain 168).